Reading from the N-terminus, the 444-residue chain is Phosphoglucosamine mutase (444 aa).

Residue serine 102 is the Phosphoserine intermediate of the active site. Positions 102, 241, 243, and 245 each coordinate Mg(2+). Position 102 is a phosphoserine (serine 102).

The protein belongs to the phosphohexose mutase family. It depends on Mg(2+) as a cofactor. Post-translationally, activated by phosphorylation.

It catalyses the reaction alpha-D-glucosamine 1-phosphate = D-glucosamine 6-phosphate. Its function is as follows. Catalyzes the conversion of glucosamine-6-phosphate to glucosamine-1-phosphate. In Mannheimia succiniciproducens (strain KCTC 0769BP / MBEL55E), this protein is Phosphoglucosamine mutase.